Consider the following 521-residue polypeptide: Ribonuclease Y (521 aa).

Residues 10-30 (LIITAGVSIALAIVAFFLGYL) traverse the membrane as a helical segment. The KH domain occupies 210–270 (TVSVVTLPND…IRREIAKLTL (61 aa)). One can recognise an HD domain in the interval 336–430 (VLAHSIEVAN…IQAADSVSAA (95 aa)).

This sequence belongs to the RNase Y family.

The protein localises to the cell membrane. Functionally, endoribonuclease that initiates mRNA decay. The polypeptide is Ribonuclease Y (Caldicellulosiruptor saccharolyticus (strain ATCC 43494 / DSM 8903 / Tp8T 6331)).